We begin with the raw amino-acid sequence, 719 residues long: Leucine-rich repeat and fibronectin type-III domain-containing protein 5 (719 aa).

The N-terminal stretch at 1 to 17 (MEKILFYLFLIGIAVKA) is a signal peptide. The region spanning 18–51 (QICPKRCVCQILSPNLATLCAKKGLLFVPPNIDR) is the LRRNT domain. Over 18 to 529 (QICPKRCVCQ…MQSQFLGGTM (512 aa)) the chain is Extracellular. 7 LRR repeats span residues 52–73 (RTVE…DFAN), 76–97 (SLVD…AFAD), 100–121 (NLRA…MFSG), 124–145 (NLHH…AFDD), 148–169 (ALEE…AVEK), 172–193 (SLHT…TFSH), and 196–217 (KMTR…PLFQ). N-linked (GlcNAc...) asparagine glycosylation is present at asparagine 73. One can recognise an LRRCT domain in the interval 240 to 286 (NPLHCNCELLWLRRLSREDDLETCASPPLLTGRYFWSIPEEEFLCEP). The region spanning 287-373 (PLITRHTHEM…GEATQIVDLH (87 aa)) is the Ig-like domain. Cysteine 308 and cysteine 357 are joined by a disulfide. Residues asparagine 330, asparagine 339, asparagine 382, asparagine 406, and asparagine 452 are each glycosylated (N-linked (GlcNAc...) asparagine). Residues 385–414 (NHIHEPDPGSSDISTSTKSGSNTSSSNGDT) form a disordered region. Over residues 393 to 414 (GSSDISTSTKSGSNTSSSNGDT) the composition is skewed to low complexity. The 90-residue stretch at 414-503 (TKLSQDKIVV…ITSLTATRVV (90 aa)) folds into the Fibronectin type-III domain. The helical transmembrane segment at 530-550 (IIIIGGIIVASVLVFIIILMI) threads the bilayer. At 551–719 (RYKVCNNNGQ…VQETQRLELI (169 aa)) the chain is on the cytoplasmic side. Positions 615–627 (ETCSSQDSSTTTS) are enriched in low complexity. The interval 615–694 (ETCSSQDSST…SVTEGPTSKR (80 aa)) is disordered. Polar residues-rich tracts occupy residues 628–641 (ALPP…SVSQ) and 649–677 (TKPS…TALQ).

It belongs to the LRFN family. In terms of assembly, can form heteromeric complexes with LRFN1, LRFN2, LRFN3 and LFRN4. Able to form homomeric complexes across cell junctions, between adjacent cells. Does not interact with DLG1, DLG2, DLG3 and DLG4.

It localises to the membrane. Functionally, cell adhesion molecule that mediates homophilic cell-cell adhesion in a Ca(2+)-independent manner. Promotes neurite outgrowth in hippocampal neurons. In Homo sapiens (Human), this protein is Leucine-rich repeat and fibronectin type-III domain-containing protein 5 (LRFN5).